The sequence spans 150 residues: Cell division protein SepF (150 aa).

The tract at residues 26 to 45 is disordered; sequence DREEIPEEHESKDRTAYQSK.

The protein belongs to the SepF family. In terms of assembly, homodimer. Interacts with FtsZ.

The protein localises to the cytoplasm. Cell division protein that is part of the divisome complex and is recruited early to the Z-ring. Probably stimulates Z-ring formation, perhaps through the cross-linking of FtsZ protofilaments. Its function overlaps with FtsA. The chain is Cell division protein SepF from Bacillus licheniformis (strain ATCC 14580 / DSM 13 / JCM 2505 / CCUG 7422 / NBRC 12200 / NCIMB 9375 / NCTC 10341 / NRRL NRS-1264 / Gibson 46).